Here is a 319-residue protein sequence, read N- to C-terminus: Acetyl-coenzyme A carboxylase carboxyl transferase subunit alpha (319 aa).

The CoA carboxyltransferase C-terminal domain maps to 35 to 296 (NIDEEVHRLR…KAQLLEDLAD (262 aa)).

This sequence belongs to the AccA family. Acetyl-CoA carboxylase is a heterohexamer composed of biotin carboxyl carrier protein (AccB), biotin carboxylase (AccC) and two subunits each of ACCase subunit alpha (AccA) and ACCase subunit beta (AccD).

The protein resides in the cytoplasm. The catalysed reaction is N(6)-carboxybiotinyl-L-lysyl-[protein] + acetyl-CoA = N(6)-biotinyl-L-lysyl-[protein] + malonyl-CoA. It functions in the pathway lipid metabolism; malonyl-CoA biosynthesis; malonyl-CoA from acetyl-CoA: step 1/1. Functionally, component of the acetyl coenzyme A carboxylase (ACC) complex. First, biotin carboxylase catalyzes the carboxylation of biotin on its carrier protein (BCCP) and then the CO(2) group is transferred by the carboxyltransferase to acetyl-CoA to form malonyl-CoA. In Salmonella paratyphi C (strain RKS4594), this protein is Acetyl-coenzyme A carboxylase carboxyl transferase subunit alpha.